The sequence spans 207 residues: Ribosomal RNA small subunit methyltransferase G (207 aa).

S-adenosyl-L-methionine is bound by residues G71, F76, 122–123 (AE), and R135.

It belongs to the methyltransferase superfamily. RNA methyltransferase RsmG family.

Its subcellular location is the cytoplasm. Specifically methylates the N7 position of a guanine in 16S rRNA. The polypeptide is Ribosomal RNA small subunit methyltransferase G (Cytophaga hutchinsonii (strain ATCC 33406 / DSM 1761 / CIP 103989 / NBRC 15051 / NCIMB 9469 / D465)).